The sequence spans 230 residues: Probable methylthioribulose-1-phosphate dehydratase (230 aa).

C87 is a binding site for substrate. Zn(2+)-binding residues include H105 and H107. The Proton donor/acceptor role is filled by E129. H185 is a binding site for Zn(2+).

This sequence belongs to the aldolase class II family. MtnB subfamily. Zn(2+) serves as cofactor.

It is found in the cytoplasm. It carries out the reaction 5-(methylsulfanyl)-D-ribulose 1-phosphate = 5-methylsulfanyl-2,3-dioxopentyl phosphate + H2O. It functions in the pathway amino-acid biosynthesis; L-methionine biosynthesis via salvage pathway; L-methionine from S-methyl-5-thio-alpha-D-ribose 1-phosphate: step 2/6. Catalyzes the dehydration of methylthioribulose-1-phosphate (MTRu-1-P) into 2,3-diketo-5-methylthiopentyl-1-phosphate (DK-MTP-1-P). The sequence is that of Probable methylthioribulose-1-phosphate dehydratase from Drosophila grimshawi (Hawaiian fruit fly).